The primary structure comprises 354 residues: Uroporphyrinogen decarboxylase (354 aa).

Substrate contacts are provided by residues Arg25–Arg29, Asp75, Tyr152, Thr207, and His330.

Belongs to the uroporphyrinogen decarboxylase family. As to quaternary structure, homodimer.

The protein resides in the cytoplasm. The enzyme catalyses uroporphyrinogen III + 4 H(+) = coproporphyrinogen III + 4 CO2. It participates in porphyrin-containing compound metabolism; protoporphyrin-IX biosynthesis; coproporphyrinogen-III from 5-aminolevulinate: step 4/4. In terms of biological role, catalyzes the decarboxylation of four acetate groups of uroporphyrinogen-III to yield coproporphyrinogen-III. The protein is Uroporphyrinogen decarboxylase of Xanthomonas campestris pv. campestris (strain 8004).